A 656-amino-acid polypeptide reads, in one-letter code: ATP-dependent zinc metalloprotease FtsH (656 aa).

The Cytoplasmic portion of the chain corresponds to 1–10 (MGDNRWLKNS). A helical transmembrane segment spans residues 11–31 (FVYLIILVAALALFFQYLGPG). The Extracellular portion of the chain corresponds to 32–116 (ASQTEEKGIA…IVQPAPAWGG (85 aa)). Residues 117–137 (LLSIFTILLPTLLLIGFFVFF) traverse the membrane as a helical segment. Residues 138 to 656 (MRQAQGSNNQ…GLGGPSPLPA (519 aa)) are Cytoplasmic-facing. 209–216 (GPPGTGKT) lines the ATP pocket. Residue H432 participates in Zn(2+) binding. E433 is a catalytic residue. Zn(2+)-binding residues include H436 and D511. Positions 622–632 (FSKSGSTTPNG) are enriched in polar residues. Positions 622–656 (FSKSGSTTPNGRTEDRPAQPDAPQMGLGGPSPLPA) are disordered.

This sequence in the central section; belongs to the AAA ATPase family. It in the C-terminal section; belongs to the peptidase M41 family. As to quaternary structure, homohexamer. Zn(2+) serves as cofactor.

The protein localises to the cell membrane. Functionally, acts as a processive, ATP-dependent zinc metallopeptidase for both cytoplasmic and membrane proteins. Plays a role in the quality control of integral membrane proteins. This is ATP-dependent zinc metalloprotease FtsH from Chloroflexus aggregans (strain MD-66 / DSM 9485).